The sequence spans 470 residues: uncharacterized protein (470 aa).

Residues 418-453 (SECCEEQEEKEKKKEKEKEKKKEKDDDDDQQNNNNN) are a coiled coil. The segment at 423 to 470 (EQEEKEKKKEKEKEKKKEKDDDDDQQNNNNNDQNGLGLGLGLNFGLNL) is disordered. Basic and acidic residues predominate over residues 426 to 441 (EKEKKKEKEKEKKKEK). A compositionally biased stretch (low complexity) spans 448 to 457 (QNNNNNDQNG).

This is an uncharacterized protein from Acidianus bottle-shaped virus (isolate Italy/Pozzuoli) (ABV).